The primary structure comprises 352 residues: Phosphoribosylformylglycinamidine cyclo-ligase (352 aa).

It belongs to the AIR synthase family.

Its subcellular location is the cytoplasm. The catalysed reaction is 2-formamido-N(1)-(5-O-phospho-beta-D-ribosyl)acetamidine + ATP = 5-amino-1-(5-phospho-beta-D-ribosyl)imidazole + ADP + phosphate + H(+). It participates in purine metabolism; IMP biosynthesis via de novo pathway; 5-amino-1-(5-phospho-D-ribosyl)imidazole from N(2)-formyl-N(1)-(5-phospho-D-ribosyl)glycinamide: step 2/2. In Saccharophagus degradans (strain 2-40 / ATCC 43961 / DSM 17024), this protein is Phosphoribosylformylglycinamidine cyclo-ligase.